A 336-amino-acid polypeptide reads, in one-letter code: Inositol 2-dehydrogenase (336 aa).

Belongs to the Gfo/Idh/MocA family. Homotetramer.

It carries out the reaction myo-inositol + NAD(+) = scyllo-inosose + NADH + H(+). In terms of biological role, involved in the oxidation of myo-inositol (MI) to 2-keto-myo-inositol (2KMI or 2-inosose). This is Inositol 2-dehydrogenase from Pseudomonas fluorescens (strain SBW25).